A 227-amino-acid chain; its full sequence is MRAVLLVSGGMDSLVATALAHREGLELAAMHVNYGQRTWQKELECFRQICVHYGIVDRLEVDAMFLSAIGGSSLTDATIPVGPADLAGTDIPTSYVPFRNANFLSMAVSWSEVIGANRIYIGAVEEDSSGYPDCRKVFYDAFNQVIEHGTRPETRIEIVTPLIAMSKAEIVRRGMELDAPFHFSWSCYKSEGKACGVCDSCARRLRAFASVGMDDPVEYEVRPNYLQ.

ATP is bound at residue 7–17 (VSGGMDSLVAT). Zn(2+) is bound by residues C187, C195, C198, and C201.

The protein belongs to the QueC family. It depends on Zn(2+) as a cofactor.

The enzyme catalyses 7-carboxy-7-deazaguanine + NH4(+) + ATP = 7-cyano-7-deazaguanine + ADP + phosphate + H2O + H(+). It functions in the pathway purine metabolism; 7-cyano-7-deazaguanine biosynthesis. Its function is as follows. Catalyzes the ATP-dependent conversion of 7-carboxy-7-deazaguanine (CDG) to 7-cyano-7-deazaguanine (preQ(0)). This is 7-cyano-7-deazaguanine synthase from Chlorobaculum tepidum (strain ATCC 49652 / DSM 12025 / NBRC 103806 / TLS) (Chlorobium tepidum).